Consider the following 281-residue polypeptide: TIP41-like protein (281 aa).

This sequence belongs to the TIP41 family.

This chain is TIP41-like protein, found in Caenorhabditis elegans.